Consider the following 508-residue polypeptide: BICD family-like cargo adapter 2 (508 aa).

Positions Met1 to Gly22 are enriched in low complexity. Disordered regions lie at residues Met1–Phe27, Leu132–Glu152, and Ala300–Ser351. Coiled coils occupy residues Ala64–Ala300 and Ala353–Val458. A compositionally biased stretch (basic and acidic residues) spans Gln135–Ala149. The disordered stretch occupies residues Lys470–Arg491. Residues Ser473–Ser489 show a composition bias toward low complexity.

Belongs to the BICDR family. As to quaternary structure, interacts with RAB13.

The protein is BICD family-like cargo adapter 2 (BICDL2) of Homo sapiens (Human).